Consider the following 414-residue polypeptide: Clusterin-associated protein 1 (414 aa).

A coiled-coil region spans residues Lys-198–Leu-291. The segment at Leu-305–Phe-414 is disordered. Acidic residues-rich tracts occupy residues Asp-312 to Leu-328 and Asp-360 to Ser-389. Ser-314, Ser-324, and Ser-326 each carry phosphoserine. Position 410 is a phosphoserine (Ser-410).

Belongs to the CLUAP1 family. Interacts with CLU/clusterin. Interacts with UBXN10; the interaction is direct.

It is found in the cell projection. The protein resides in the cilium. It localises to the nucleus. Functionally, required for cilia biogenesis. Appears to function within the multiple intraflagellar transport complex B (IFT-B). Key regulator of hedgehog signaling. In Macaca fascicularis (Crab-eating macaque), this protein is Clusterin-associated protein 1 (CLUAP1).